We begin with the raw amino-acid sequence, 509 residues long: Dihydrolipoyl dehydrogenase, mitochondrial (509 aa).

The N-terminal 35 residues, 1-35 (MQSWSRVYRSLAKKGHFNRISHGLQGVSSVPLRTY), are a transit peptide targeting the mitochondrion. K66 is subject to N6-acetyllysine; alternate. At K66 the chain carries N6-succinyllysine; alternate. FAD-binding positions include 71-80 (EKNETLGGTC) and K89. C80 and C85 form a disulfide bridge. 4 positions are modified to N6-acetyllysine; alternate: K104, K122, K132, and K143. An N6-succinyllysine; alternate mark is found at K104, K122, K132, and K143. G154 is an FAD binding site. N6-succinyllysine is present on residues K159 and K166. 183-185 (TGS) contacts FAD. Residues 220–227 (GAGVIGVE) and E243 contribute to the NAD(+) site. K273 and K277 each carry N6-succinyllysine. V278 provides a ligand contact to NAD(+). Phosphoserine is present on residues S285 and S297. An NAD(+)-binding site is contributed by G314. K334 carries the N6-acetyllysine; alternate modification. K334 is modified (N6-succinyllysine; alternate). At K346 the chain carries N6-acetyllysine. FAD contacts are provided by residues D355 and 361 to 364 (MLAH). At K410 the chain carries N6-acetyllysine; alternate. Residue K410 is modified to N6-succinyllysine; alternate. An N6-acetyllysine mark is found at K417 and K420. N6-succinyllysine is present on K430. H487 acts as the Proton acceptor in catalysis. K505 bears the N6-acetyllysine; alternate mark. K505 is modified (N6-succinyllysine; alternate).

Belongs to the class-I pyridine nucleotide-disulfide oxidoreductase family. In terms of assembly, homodimer. Part of the multimeric pyruvate dehydrogenase complex that contains multiple copies of pyruvate dehydrogenase (subunits PDHA (PDHA1 or PDHA2) and PDHB, E1), dihydrolipoamide acetyltransferase (DLAT, E2) and lipoamide dehydrogenase (DLD, E3). These subunits are bound to an inner core composed of about 48 DLAT and 12 PDHX molecules (by non covalent bonds). The 2-oxoglutarate dehydrogenase complex is composed of OGDH (2-oxoglutarate dehydrogenase; E1), DLST (dihydrolipoamide succinyltransferase; E2), DLD (dihydrolipoamide dehydrogenase; E3) and the assembly factor KGD4. It contains multiple copies of the three enzymatic components (E1, E2 and E3). In the nucleus, the 2-oxoglutarate dehydrogenase complex associates with KAT2A. Interacts with PDHX. FAD is required as a cofactor. Post-translationally, tyrosine phosphorylated. As to expression, expressed in liver (at protein level).

It localises to the mitochondrion matrix. Its subcellular location is the nucleus. The protein resides in the cell projection. The protein localises to the cilium. It is found in the flagellum. It localises to the cytoplasmic vesicle. Its subcellular location is the secretory vesicle. The protein resides in the acrosome. The enzyme catalyses N(6)-[(R)-dihydrolipoyl]-L-lysyl-[protein] + NAD(+) = N(6)-[(R)-lipoyl]-L-lysyl-[protein] + NADH + H(+). In terms of biological role, lipoamide dehydrogenase is a component of the glycine cleavage system as well as an E3 component of three alpha-ketoacid dehydrogenase complexes (pyruvate-, alpha-ketoglutarate-, and branched-chain amino acid-dehydrogenase complex). The 2-oxoglutarate dehydrogenase complex is mainly active in the mitochondrion. A fraction of the 2-oxoglutarate dehydrogenase complex also localizes in the nucleus and is required for lysine succinylation of histones: associates with KAT2A on chromatin and provides succinyl-CoA to histone succinyltransferase KAT2A. In monomeric form may have additional moonlighting function as serine protease. Involved in the hyperactivation of spermatazoa during capacitation and in the spermatazoal acrosome reaction. The sequence is that of Dihydrolipoyl dehydrogenase, mitochondrial (Dld) from Mus musculus (Mouse).